We begin with the raw amino-acid sequence, 430 residues long: Dihydrolipoyllysine-residue acetyltransferase component of pyruvate dehydrogenase complex (430 aa).

The 76-residue stretch at 2 to 77 (AFEFRLPDIG…VVGDVIVKID (76 aa)) folds into the Lipoyl-binding domain. Lys-43 carries the N6-lipoyllysine modification. Residues 80-122 (DAEDMQFKGHDDDSSSKEEPAKEEAPAEQAPVATQTEEVDENR) form a disordered region. Residues 84 to 104 (MQFKGHDDDSSSKEEPAKEEA) show a composition bias toward basic and acidic residues. The Peripheral subunit-binding (PSBD) domain occupies 125–162 (KAMPSVRKYAREKGVNIKAVSGSGKNGRITKEDVDAYL). A disordered region spans residues 164–200 (GGAPTASNESADSATNEEVAETPAAPAAVSLEGDFPE). Low complexity predominate over residues 177–192 (ATNEEVAETPAAPAAV). His-401 is an active-site residue.

The protein belongs to the 2-oxoacid dehydrogenase family. Forms a 24-polypeptide structural core with octahedral symmetry. (R)-lipoate serves as cofactor.

It carries out the reaction N(6)-[(R)-dihydrolipoyl]-L-lysyl-[protein] + acetyl-CoA = N(6)-[(R)-S(8)-acetyldihydrolipoyl]-L-lysyl-[protein] + CoA. In terms of biological role, the pyruvate dehydrogenase complex catalyzes the overall conversion of pyruvate to acetyl-CoA and CO(2). It contains multiple copies of three enzymatic components: pyruvate dehydrogenase (E1), dihydrolipoamide acetyltransferase (E2) and lipoamide dehydrogenase (E3). This Staphylococcus aureus protein is Dihydrolipoyllysine-residue acetyltransferase component of pyruvate dehydrogenase complex (pdhC).